Reading from the N-terminus, the 170-residue chain is Adenine phosphoribosyltransferase (170 aa).

Belongs to the purine/pyrimidine phosphoribosyltransferase family. In terms of assembly, homodimer.

The protein localises to the cytoplasm. It carries out the reaction AMP + diphosphate = 5-phospho-alpha-D-ribose 1-diphosphate + adenine. Its pathway is purine metabolism; AMP biosynthesis via salvage pathway; AMP from adenine: step 1/1. Its function is as follows. Catalyzes a salvage reaction resulting in the formation of AMP, that is energically less costly than de novo synthesis. This is Adenine phosphoribosyltransferase from Streptococcus suis (strain 98HAH33).